The sequence spans 188 residues: Inner kinetochore subunit cnl2 (188 aa).

The protein belongs to the NKP2 family. As to quaternary structure, component of the inner kinetochore constitutive centromere-associated network (CCAN) (also known as central kinetochore Sim4 complex in fission yeast), which is composed of at least cnl2, cnp3, cnp20, fta1, fta2, fta3, fta4, fta6, fta7, mal2, mhf1, mhf2, mis6, mis15, mis17, sim4 and wip1.

It localises to the cytoplasm. Its subcellular location is the nucleus. It is found in the chromosome. The protein resides in the centromere. The protein localises to the kinetochore. In terms of biological role, component of the kinetochore, a multiprotein complex that assembles on centromeric DNA and attaches chromosomes to spindle microtubules, mediating chromosome segregation and sister chromatid segregation during meiosis and mitosis. Component of the inner kinetochore constitutive centromere-associated network (CCAN), which serves as a structural platform for outer kinetochore assembly. This is Inner kinetochore subunit cnl2 (cnl2) from Schizosaccharomyces pombe (strain 972 / ATCC 24843) (Fission yeast).